A 153-amino-acid polypeptide reads, in one-letter code: MPPSGLELMNGQVLPAFLLCSALLVIKMYVVAVITGQVRLRKKAFANPEDAQRHGGLQYCRNDPDVERCLRAHRNDMETIYPFLFLGFVYSFLGPNPFVARMHFLVFFLGRMVHTVAYLGKLRAPTRSLAYTLAQLPCASMALQIVWEAARHL.

At 1 to 13 (MPPSGLELMNGQV) the chain is on the lumenal side. Residues 14-42 (LPAFLLCSALLVIKMYVVAVITGQVRLRK) form a helical membrane-spanning segment. Arginine 39 provides a ligand contact to glutathione. Topologically, residues 43 to 61 (KAFANPEDAQRHGGLQYCR) are cytoplasmic. A helical transmembrane segment spans residues 62–91 (NDPDVERCLRAHRNDMETIYPFLFLGFVYS). 74 to 78 (RNDME) contacts glutathione. The Lumenal portion of the chain corresponds to 92–96 (FLGPN). The chain crosses the membrane as a helical span at residues 97–120 (PFVARMHFLVFFLGRMVHTVAYLG). Glutathione is bound by residues histidine 114 and tyrosine 118. The Cytoplasmic portion of the chain corresponds to 121-124 (KLRA). A helical transmembrane segment spans residues 125–153 (PTRSLAYTLAQLPCASMALQIVWEAARHL). A glutathione-binding site is contributed by 127–131 (RSLAY).

Belongs to the MAPEG family. As to quaternary structure, homotrimer. Glutathione is required as a cofactor.

It is found in the membrane. Its subcellular location is the cytoplasm. The protein resides in the perinuclear region. It catalyses the reaction prostaglandin H2 = prostaglandin E2. The enzyme catalyses 2-glyceryl-prostaglandin H2 = 2-glyceryl-prostaglandin E2. It carries out the reaction prostaglandin G2 = (15S)-15-hydroperoxy-prostaglandin E2. The catalysed reaction is 1-chloro-2,4-dinitrobenzene + glutathione = 2,4-dinitrophenyl-S-glutathione + chloride + H(+). It catalyses the reaction (5S)-hydroperoxy-(6E,8Z,11Z,14Z)-eicosatetraenoate + 2 glutathione = (5S)-hydroxy-(6E,8Z,11Z,14Z)-eicosatetraenoate + glutathione disulfide + H2O. It functions in the pathway lipid metabolism; prostaglandin biosynthesis. In terms of biological role, terminal enzyme of the cyclooxygenase (COX)-2-mediated prostaglandin E2 (PGE2) biosynthetic pathway. Catalyzes the glutathione-dependent oxidoreduction of prostaglandin endoperoxide H2 (PGH2) to prostaglandin E2 (PGE2) in response to inflammatory stimuli. Plays a key role in inflammation response, fever and pain. Also catalyzes the oxidoreduction of endocannabinoids into prostaglandin glycerol esters and PGG2 into 15-hydroperoxy-PGE2. In addition, displays low glutathione transferase and glutathione-dependent peroxidase activities, toward 1-chloro-2,4-dinitrobenzene and 5-hydroperoxyicosatetraenoic acid (5-HPETE), respectively. This chain is Prostaglandin E synthase (PTGES), found in Bos taurus (Bovine).